The following is a 758-amino-acid chain: Deoxynucleotidyltransferase terminal-interacting protein 2 (758 aa).

Polar residues predominate over residues 1–21; the sequence is MVVTRSGLSRTRLQESSQQKR. The disordered stretch occupies residues 1 to 176; that stretch reads MVVTRSGLSR…SQSGTVSDAE (176 aa). 4 positions are modified to phosphoserine: Ser17, Ser133, Ser137, and Ser140. A compositionally biased stretch (low complexity) spans 128–143; that stretch reads DEVVVSEAESHVSGVS. The segment covering 155-172 has biased composition (polar residues); sequence NKANSQRDSSQESQSGTV. Phosphoserine occurs at positions 173 and 183. Lys210 is covalently cross-linked (Glycyl lysine isopeptide (Lys-Gly) (interchain with G-Cter in SUMO2)). Residues Ser229, Ser240, Ser248, and Ser255 each carry the phosphoserine modification. Residues 231–255 are compositionally biased toward polar residues; sequence ATQLSARPLSQRNMPNVSDSETYNS. 4 disordered regions span residues 231-277, 312-353, 377-480, and 501-552; these read ATQL…HQNL, KVIN…QLSS, DKRG…AEDL, and DKNF…DLLS. Lys317 is covalently cross-linked (Glycyl lysine isopeptide (Lys-Gly) (interchain with G-Cter in SUMO2)). Residues 321–353 are compositionally biased toward polar residues; it reads RSLSEAQDTSLQQSVSQNHSSTPNKKPTFQLSS. Phosphoserine is present on residues Ser324 and Ser330. Residues Lys345 and Lys384 each participate in a glycyl lysine isopeptide (Lys-Gly) (interchain with G-Cter in SUMO2) cross-link. Residues 377–387 show a composition bias toward basic and acidic residues; sequence DKRGGSGKKSD. Positions 431-440 are enriched in polar residues; it reads LSMTQDTTDS. The segment covering 447 to 456 has biased composition (low complexity); that stretch reads SSDESQQSDS. 2 positions are modified to phosphoserine: Ser476 and Ser512. The stretch at 512–541 forms a coiled coil; the sequence is SEVAIEEEKEEEEKEEENSEEDSSDSDENK. Residues 515–550 show a composition bias toward acidic residues; sequence AIEEEKEEEEKEEENSEEDSSDSDENKDESSDEEDL. Residues 550-607 are tdBR region; mediates interaction with DNTT; it reads LLSNTKSKLLKLTSSSIDPGLNIKQLGGLYINFNVDKLQPHKETLTQIKEKKKNELLQ. Residues Lys560, Lys586, and Lys608 each participate in a glycyl lysine isopeptide (Lys-Gly) (interchain with G-Cter in SUMO2) cross-link. Thr612 is modified (phosphothreonine). The interval 621–647 is disordered; the sequence is VPPYSESKHRLQKQRRKERQKTAGNGW. Lys628 participates in a covalent cross-link: Glycyl lysine isopeptide (Lys-Gly) (interchain with G-Cter in SUMO2). Residues 630-639 show a composition bias toward basic residues; that stretch reads RLQKQRRKER. Glycyl lysine isopeptide (Lys-Gly) (interchain with G-Cter in SUMO2) cross-links involve residues Lys651, Lys660, Lys688, and Lys733.

As to quaternary structure, forms a ternary complex with DNTT and core histone; interaction with PCNA releases DNTT and H2A/H2B histones from this ternary complex. Interacts with ESR1, ESR2, PPARG and RXRA. Part of the small subunit (SSU) processome, composed of more than 70 proteins and the RNA chaperone small nucleolar RNA (snoRNA) U3.

The protein resides in the nucleus. It localises to the nucleolus. In terms of biological role, regulates the transcriptional activity of DNTT and ESR1. May function as a chromatin remodeling protein. Part of the small subunit (SSU) processome, first precursor of the small eukaryotic ribosomal subunit. During the assembly of the SSU processome in the nucleolus, many ribosome biogenesis factors, an RNA chaperone and ribosomal proteins associate with the nascent pre-rRNA and work in concert to generate RNA folding, modifications, rearrangements and cleavage as well as targeted degradation of pre-ribosomal RNA by the RNA exosome. In Mus musculus (Mouse), this protein is Deoxynucleotidyltransferase terminal-interacting protein 2 (Dnttip2).